The following is a 90-amino-acid chain: Large ribosomal subunit protein bL27 (90 aa).

A disordered region spans residues 1-20 (MAHKKAGGSSRNGRDSAGKR).

The protein belongs to the bacterial ribosomal protein bL27 family.

The polypeptide is Large ribosomal subunit protein bL27 (Rhodopseudomonas palustris (strain ATCC BAA-98 / CGA009)).